The sequence spans 637 residues: Biosynthetic arginine decarboxylase (637 aa).

K101 carries the N6-(pyridoxal phosphate)lysine modification. Residue 286–296 coordinates substrate; the sequence is VDIGGGLGVDY.

This sequence belongs to the Orn/Lys/Arg decarboxylase class-II family. SpeA subfamily. Mg(2+) is required as a cofactor. Requires pyridoxal 5'-phosphate as cofactor.

The enzyme catalyses L-arginine + H(+) = agmatine + CO2. The protein operates within amine and polyamine biosynthesis; agmatine biosynthesis; agmatine from L-arginine: step 1/1. Its function is as follows. Catalyzes the biosynthesis of agmatine from arginine. The protein is Biosynthetic arginine decarboxylase of Marinobacter nauticus (strain ATCC 700491 / DSM 11845 / VT8) (Marinobacter aquaeolei).